A 284-amino-acid chain; its full sequence is Aquaporin NIP1-1 (284 aa).

The span at 1–12 (MAGGDNNSQTTN) shows a compositional bias: polar residues. The tract at residues 1 to 28 (MAGGDNNSQTTNGGSGHEQRAMEEGRKQ) is disordered. The span at 17 to 28 (HEQRAMEEGRKQ) shows a compositional bias: basic and acidic residues. A run of 2 helical transmembrane segments spans residues 50-70 (IIAE…AVTI) and 78-98 (ITFP…VYAV). An NPA 1 motif is present at residues 107 to 109 (NPA). 3 helical membrane passes run 129–149 (AAAQ…MFGG), 166–186 (SLVL…GVAT), and 194–214 (LAGL…GPIS). The short motif at 219–221 (NPA) is the NPA 2 element. The helical transmembrane segment at 236 to 256 (IWVYIVGPVAGAVAGAWAYNI) threads the bilayer.

Belongs to the MIP/aquaporin (TC 1.A.8) family. NIP (TC 1.A.8.12) subfamily. As to expression, expressed in leaves and at lower levels in roots and anthers.

Its subcellular location is the membrane. Its function is as follows. Aquaporins facilitate the transport of water and small neutral solutes across cell membranes. The protein is Aquaporin NIP1-1 (NIP1-1) of Oryza sativa subsp. japonica (Rice).